We begin with the raw amino-acid sequence, 458 residues long: UDP-N-acetylmuramoylalanine--D-glutamate ligase (458 aa).

G118–T124 contributes to the ATP binding site.

It belongs to the MurCDEF family.

It is found in the cytoplasm. It catalyses the reaction UDP-N-acetyl-alpha-D-muramoyl-L-alanine + D-glutamate + ATP = UDP-N-acetyl-alpha-D-muramoyl-L-alanyl-D-glutamate + ADP + phosphate + H(+). It functions in the pathway cell wall biogenesis; peptidoglycan biosynthesis. Functionally, cell wall formation. Catalyzes the addition of glutamate to the nucleotide precursor UDP-N-acetylmuramoyl-L-alanine (UMA). This Ligilactobacillus salivarius (strain UCC118) (Lactobacillus salivarius) protein is UDP-N-acetylmuramoylalanine--D-glutamate ligase.